We begin with the raw amino-acid sequence, 88 residues long: MEYKKRVDALVFFSLLLLGYFAAHAHGNGHVTDDVNVSAPAEEGILREKRAQCAQGFLPCKDNKCYCCIGGRTHDCYYTMAQCSHACF.

Residues 1 to 27 (MEYKKRVDALVFFSLLLLGYFAAHAHG) form the signal peptide. N-linked (GlcNAc...) asparagine glycosylation occurs at N36. 2 disulfide bridges follow: C65-C87 and C68-C76.

It belongs to the MEG family. Glycosylated. As to expression, expressed exclusively in endosperm. Found in basal endosperm transfer cells.

The protein localises to the secreted. Its subcellular location is the cell wall. It localises to the cell membrane. It is found in the extracellular space. The protein resides in the extracellular matrix. Regulates maternal nutrient uptake, sucrose partitioning, and seed biomass yield. Necessary and sufficient for the establishment and differentiation of the endosperm nutrient transfer cells located at the mother:seed interface. Exclusive expression of the maternal allele at the early stages of endosperm development. The maternal allele is hypomethylated. At later stages, expression becomes biallelic. Regulated by the transcription factor MRP1. This is Protein MATERNALLY EXPRESSED GENE 1 (MEG1) from Zea mays (Maize).